Consider the following 597-residue polypeptide: Sodium/mannose cotransporter SLC5A10 (597 aa).

Residues 1 to 16 (MAVDNSTSDAHTPGRQ) lie on the Extracellular side of the membrane. Asn-5 carries N-linked (GlcNAc...) asparagine glycosylation. The helical transmembrane segment at 17–37 (LTVVDIAIIAVYFALNVAVGI) threads the bilayer. Residues 38–73 (WSSCRASRNTVRGYFLAGRDMTWWPIGASLFASSEG) are Cytoplasmic-facing. A helical transmembrane segment spans residues 74–94 (SGLFIGLAGSGAAGGLAVAGF). Topologically, residues 95–100 (EWNATY) are extracellular. The N-linked (GlcNAc...) asparagine glycan is linked to Asn-97. A helical transmembrane segment spans residues 101 to 121 (VLLALAWVFVPIYLSSEIVTM). The Cytoplasmic portion of the chain corresponds to 122–139 (PEYMQKRYGGQRIRMYLS). A helical membrane pass occupies residues 140–162 (VLSLLLSVFTKISIDLYAGALFV). The Extracellular segment spans residues 163–174 (HICLGWNFYLST). The chain crosses the membrane as a helical span at residues 175 to 195 (VIMLAITALYTIAGGLTAVIY). Topologically, residues 196–201 (TDALQT) are cytoplasmic. The helical transmembrane segment at 202-222 (LVMVAGAVILTIKAFEQIGGY) threads the bilayer. Over 223–265 (EQLAEAYAQAVPSRTISNTTCHVPRADAMHMFRDPYTADLPWT) the chain is Extracellular. The helical transmembrane segment at 266 to 286 (GMTFGLTIMAAWYWCTDQVIV) threads the bilayer. The Cytoplasmic segment spans residues 287-301 (QRSLSARDLNHAKGG). The chain crosses the membrane as a helical span at residues 302 to 322 (SILASYLKMLPMGLMVMPGMI). At 323–367 (SRVLFPDDVGCVVPAECLRACGAEIGCSNIAYPKLVMELMPTGLR) the chain is on the extracellular side. The helical transmembrane segment at 368-388 (GLMVAVMMAALMSSLTSIFNS) threads the bilayer. Residues 389-410 (SSTLFTMDIWRRLRPRAGEREL) are Cytoplasmic-facing. Residues 411–431 (LLVGRLVIVVLVGVSVAWIPV) form a helical membrane-spanning segment. Residues 432-444 (LQGSNGGQLFIYM) are Extracellular-facing. The helical transmembrane segment at 445 to 465 (QSVTSSLAPPVTAVFVLGIFW) threads the bilayer. Over 466 to 472 (RRANEQG) the chain is Cytoplasmic. Residues 473–493 (AFWGLMAGLAVGATRLVLEFL) traverse the membrane as a helical segment. The Extracellular portion of the chain corresponds to 494–514 (HPAPPCGHPDTRPPILHGVHY). Residues 515-535 (LHFAVALFLLSGAVVVAGSLL) form a helical membrane-spanning segment. The Cytoplasmic segment spans residues 536–576 (TPHPQGVQIQSLTWWTLAQDLPLGVKTGDGRASQRHAFWAR). A helical membrane pass occupies residues 577 to 597 (VCGVNAILLMCVNIFFYTYFA).

The protein belongs to the sodium:solute symporter (SSF) (TC 2.A.21) family. In terms of tissue distribution, predominantyl expressed in kidney. Also detected at very low levels in testes, skeletal muscle, and spleen.

It localises to the apical cell membrane. The catalysed reaction is D-mannose(out) + Na(+)(out) = D-mannose(in) + Na(+)(in). It catalyses the reaction D-fructopyranose(out) + Na(+)(out) = D-fructopyranose(in) + Na(+)(in). In terms of biological role, electrogenic Na+-coupled sugar symporter that actively transports D-mannose or D-fructose at the plasma membrane, with a Na+ to sugar coupling ratio of 1:1. Transporter activity is driven by a transmembrane Na+ electrochemical gradient set by the Na+/K+ pump. Exclusively recognizes sugar substrates having a pyranose ring with an axial hydroxyl group on carbon 2. Has likely evolved to enable renal reabsorption of D-mannose, an important constituent of oligosaccharide chains of glycoproteins. Contributes to dietary D-fructose reabsorption from glomerular filtrate across the brush border of the kidney. This is Sodium/mannose cotransporter SLC5A10 (SLC5A10) from Bos taurus (Bovine).